We begin with the raw amino-acid sequence, 411 residues long: Imidazolonepropionase (411 aa).

Residues His78 and His80 each contribute to the Fe(3+) site. Residues His78 and His80 each coordinate Zn(2+). 4-imidazolone-5-propanoate-binding residues include Arg87, Tyr150, and His183. Tyr150 is an N-formimidoyl-L-glutamate binding site. His248 contacts Fe(3+). Zn(2+) is bound at residue His248. Gln251 serves as a coordination point for 4-imidazolone-5-propanoate. Asp322 is a Fe(3+) binding site. Residue Asp322 coordinates Zn(2+). Asn324 and Gly326 together coordinate N-formimidoyl-L-glutamate. Ser327 provides a ligand contact to 4-imidazolone-5-propanoate.

This sequence belongs to the metallo-dependent hydrolases superfamily. HutI family. Zn(2+) is required as a cofactor. Fe(3+) serves as cofactor.

The protein resides in the cytoplasm. It catalyses the reaction 4-imidazolone-5-propanoate + H2O = N-formimidoyl-L-glutamate. The protein operates within amino-acid degradation; L-histidine degradation into L-glutamate; N-formimidoyl-L-glutamate from L-histidine: step 3/3. Catalyzes the hydrolytic cleavage of the carbon-nitrogen bond in imidazolone-5-propanoate to yield N-formimidoyl-L-glutamate. It is the third step in the universal histidine degradation pathway. The chain is Imidazolonepropionase from Flavobacterium johnsoniae (strain ATCC 17061 / DSM 2064 / JCM 8514 / BCRC 14874 / CCUG 350202 / NBRC 14942 / NCIMB 11054 / UW101) (Cytophaga johnsonae).